Here is a 108-residue protein sequence, read N- to C-terminus: MADPRVRQIKIKTGVVKRLVKEKVMYEKEAKQQEEKIEKMKAEDGENYAIKKQAEILQESRMMIPDCQRRLEAAYTDLRQILESEKDLEEAEEYKEARIVLDSVKLEA.

Ala-2 carries the post-translational modification N-acetylalanine.

Belongs to the TBCA family. In terms of assembly, supercomplex made of cofactors A to E. Cofactors A and D function by capturing and stabilizing tubulin in a quasi-native conformation. Cofactor E binds to the cofactor D-tubulin complex; interaction with cofactor C then causes the release of tubulin polypeptides that are committed to the native state.

It is found in the cytoplasm. The protein localises to the cytoskeleton. Functionally, tubulin-folding protein; involved in the early step of the tubulin folding pathway. The polypeptide is Tubulin-specific chaperone A (Tbca) (Rattus norvegicus (Rat)).